The chain runs to 154 residues: Endoribonuclease YbeY (154 aa).

Zn(2+) is bound by residues histidine 113, histidine 117, and histidine 123.

It belongs to the endoribonuclease YbeY family. Zn(2+) serves as cofactor.

The protein localises to the cytoplasm. Its function is as follows. Single strand-specific metallo-endoribonuclease involved in late-stage 70S ribosome quality control and in maturation of the 3' terminus of the 16S rRNA. The protein is Endoribonuclease YbeY of Anaplasma marginale (strain Florida).